Reading from the N-terminus, the 314-residue chain is Formate-nitrite transporter (314 aa).

The Cytoplasmic portion of the chain corresponds to 1 to 47; that stretch reads MQKSTSKYVIDPISIKTNCSSEESYIRCVEYGKGKAHYRNLILLAKA. A helical transmembrane segment spans residues 48–68; the sequence is ILAGVFVGVCAHASGIAGGLF. The Extracellular segment spans residues 69–77; it reads YYHKLREYV. Residues 78–98 traverse the membrane as a helical segment; it reads GISMSAFVYGFTFPIAFLCII. At 99-128 the chain is on the cytoplasmic side; that stretch reads CTGSDLFTGNTLAVTTALLQKKLGLLCYMR. Residues 129 to 149 traverse the membrane as a helical segment; the sequence is VMCISLVGNYIGAVAFAFFVS. Residues 150 to 185 are Extracellular-facing; that stretch reads YGSGAFSINTDTSKNHIFQFLNDIAIKKVSHSFIEC. A helical transmembrane segment spans residues 186–206; it reads ICLAIGCNIFVCLAVYFVLSI. Residues 207 to 211 lie on the Cytoplasmic side of the membrane; that stretch reads KDGSG. Residues 212–232 traverse the membrane as a helical segment; sequence LVFSVFFAVYAFAIAGYEHII. The Extracellular segment spans residues 233-260; that stretch reads ANIYTLNLALMISNDISFTQVYFKNLLP. A helical transmembrane segment spans residues 261–281; sequence TLIGNYIAGGLVLAFPLFFIY. The Cytoplasmic portion of the chain corresponds to 282–314; it reads RSCYYDYDKMNDELNTVVLKTLSLELQNESNHI.

The protein belongs to the FNT transporter (TC 1.A.16) family. In terms of assembly, homopentamer.

It is found in the cell membrane. The protein localises to the vacuole membrane. It catalyses the reaction (S)-lactate(in) + H(+)(in) = (S)-lactate(out) + H(+)(out). The enzyme catalyses formate(in) + H(+)(in) = formate(out) + H(+)(out). The catalysed reaction is pyruvate(out) + H(+)(out) = pyruvate(in) + H(+)(in). It carries out the reaction acetate(out) + H(+)(out) = acetate(in) + H(+)(in). Its activity is regulated as follows. Inhibited by the Malaria Box compound MMV007839 and its derivatives BH296 and BH267.meta. Its function is as follows. Monocarboxylate-proton symporter that mediates the efflux of the waste product lactate in the intraerythrocytic parasites; active in acidic-to-neutral pH range. Transports L-lactate. The sequence is that of Formate-nitrite transporter from Plasmodium malariae.